We begin with the raw amino-acid sequence, 419 residues long: Imidazolonepropionase (419 aa).

Residues His84 and His86 each contribute to the Fe(3+) site. Zn(2+)-binding residues include His84 and His86. 4-imidazolone-5-propanoate is bound by residues Arg93, Tyr156, and His189. Residue Tyr156 coordinates N-formimidoyl-L-glutamate. Residue His254 coordinates Fe(3+). His254 serves as a coordination point for Zn(2+). Gln257 contributes to the 4-imidazolone-5-propanoate binding site. Asp329 is a Fe(3+) binding site. Asp329 is a Zn(2+) binding site. Residues Asn331 and Gly333 each contribute to the N-formimidoyl-L-glutamate site. Position 334 (Thr334) interacts with 4-imidazolone-5-propanoate.

The protein belongs to the metallo-dependent hydrolases superfamily. HutI family. Monomer. Forms a tightly packed homodimer in the crystal, but this seems to be an artifact of crystallization. The cofactor is Zn(2+). Fe(3+) is required as a cofactor.

Its subcellular location is the cytoplasm. The enzyme catalyses 4-imidazolone-5-propanoate + H2O = N-formimidoyl-L-glutamate. Its pathway is amino-acid degradation; L-histidine degradation into L-glutamate; N-formimidoyl-L-glutamate from L-histidine: step 3/3. In terms of biological role, catalyzes the hydrolytic cleavage of the carbon-nitrogen bond in imidazolone-5-propanoate to yield N-formimidoyl-L-glutamate. It is the third step in the universal histidine degradation pathway. In Agrobacterium fabrum (strain C58 / ATCC 33970) (Agrobacterium tumefaciens (strain C58)), this protein is Imidazolonepropionase.